A 307-amino-acid chain; its full sequence is MNWITNYVRPKINSMLGRREMPENLWIKDPESGEMVFHKDLEENQWVVPASGYHIKISAKDRLKHFFDNGAYETLENPKAGVDPLKFRDERRYIDRLRDAKAKTNLDDAVVNAIGRIEGLEILATVQDFAFMGGSLGMAAGEAIVRGFETAVERRLPLVLFAASGGARMQEGILSLMQLPRTTVAVDRLKEAGLPYIVVLTNPTTGGVTASYAMLGDVHIAEPGALIGFAGPRVIEQTIREKLPEGFQRAEYLKEHGMVDMVVSRLEMKATIARLLKILLKEQATEENGSRRLPAPEAAVVEAAVNA.

A CoA carboxyltransferase N-terminal domain is found at 25–294 (LWIKDPESGE…TEENGSRRLP (270 aa)).

This sequence belongs to the AccD/PCCB family. Acetyl-CoA carboxylase is a heterohexamer composed of biotin carboxyl carrier protein (AccB), biotin carboxylase (AccC) and two subunits each of ACCase subunit alpha (AccA) and ACCase subunit beta (AccD).

It is found in the cytoplasm. It catalyses the reaction N(6)-carboxybiotinyl-L-lysyl-[protein] + acetyl-CoA = N(6)-biotinyl-L-lysyl-[protein] + malonyl-CoA. The protein operates within lipid metabolism; malonyl-CoA biosynthesis; malonyl-CoA from acetyl-CoA: step 1/1. Its function is as follows. Component of the acetyl coenzyme A carboxylase (ACC) complex. Biotin carboxylase (BC) catalyzes the carboxylation of biotin on its carrier protein (BCCP) and then the CO(2) group is transferred by the transcarboxylase to acetyl-CoA to form malonyl-CoA. The sequence is that of Acetyl-coenzyme A carboxylase carboxyl transferase subunit beta from Chelativorans sp. (strain BNC1).